Consider the following 430-residue polypeptide: GTPase Obg (430 aa).

An Obg domain is found at 1–158 (MFVDQVKISL…LDVSLELKLL (158 aa)). The segment at 118-145 (KGGRGGRGNSRFATPRNPAPDFSEKGEP) is disordered. One can recognise an OBG-type G domain in the interval 159–329 (ADVGLVGFPS…LLYAIADKLE (171 aa)). GTP contacts are provided by residues 165–172 (GFPSVGKS), 190–194 (FTTIK), 212–215 (DLPG), 282–285 (NKMD), and 310–312 (STI). 2 residues coordinate Mg(2+): Ser-172 and Thr-192. Residues 352–430 (KHTPSQDKFT…ILGGEFEFVE (79 aa)) form the OCT domain.

The protein belongs to the TRAFAC class OBG-HflX-like GTPase superfamily. OBG GTPase family. Monomer. Mg(2+) serves as cofactor.

Its subcellular location is the cytoplasm. In terms of biological role, an essential GTPase which binds GTP, GDP and possibly (p)ppGpp with moderate affinity, with high nucleotide exchange rates and a fairly low GTP hydrolysis rate. Plays a role in control of the cell cycle, stress response, ribosome biogenesis and in those bacteria that undergo differentiation, in morphogenesis control. This chain is GTPase Obg, found in Staphylococcus aureus (strain MRSA252).